The chain runs to 535 residues: Protein translocase subunit SecD (535 aa).

The next 6 helical transmembrane spans lie at 5-25, 377-397, 402-421, 425-444, 469-489, and 496-516; these read LTWK…GIIG, AIIG…GAGI, SLLL…GAVL, GIAG…VLIF, WLTI…LFLF, and GFAV…VFVS.

This sequence belongs to the SecD/SecF family. SecD subfamily. As to quaternary structure, forms a complex with SecF. Part of the essential Sec protein translocation apparatus which comprises SecA, SecYEG and auxiliary proteins SecDF. Other proteins may also be involved.

The protein resides in the cell inner membrane. Its function is as follows. Part of the Sec protein translocase complex. Interacts with the SecYEG preprotein conducting channel. SecDF uses the proton motive force (PMF) to complete protein translocation after the ATP-dependent function of SecA. This chain is Protein translocase subunit SecD, found in Koribacter versatilis (strain Ellin345).